The following is a 437-amino-acid chain: ATP-dependent RNA helicase RhlB (437 aa).

Positions 9–37 (KKFADFPLHKEVQQALNEVGFEFCTPIQA) match the Q motif motif. Residues 40 to 219 (LPILLAKKDI…YDHMNEPEKV (180 aa)) enclose the Helicase ATP-binding domain. 53–60 (AQTGTGKT) is an ATP binding site. The DEAD box signature appears at 165–168 (DEAD). Residues 243 to 390 (KMPLLLSLLE…VTSYDSEALL (148 aa)) enclose the Helicase C-terminal domain. The interval 394–437 (PAPKRIHRKPSSHSRNSRDRSGSRPQGGHRGNAPRRHDKTRRHS) is disordered. Residues 425–437 (NAPRRHDKTRRHS) show a composition bias toward basic residues.

It belongs to the DEAD box helicase family. RhlB subfamily. In terms of assembly, component of the RNA degradosome, which is a multiprotein complex involved in RNA processing and mRNA degradation.

Its subcellular location is the cytoplasm. It carries out the reaction ATP + H2O = ADP + phosphate + H(+). DEAD-box RNA helicase involved in RNA degradation. Has RNA-dependent ATPase activity and unwinds double-stranded RNA. The chain is ATP-dependent RNA helicase RhlB from Shewanella piezotolerans (strain WP3 / JCM 13877).